We begin with the raw amino-acid sequence, 168 residues long: Small ribosomal subunit protein uS9 (168 aa).

A compositionally biased stretch (low complexity) spans 1–11 (MAQNEELTTEA). Positions 1 to 36 (MAQNEELTTEAVEAEENPTSYTSESSAAEAAPKKER) are disordered.

The protein belongs to the universal ribosomal protein uS9 family.

The sequence is that of Small ribosomal subunit protein uS9 from Pseudarthrobacter chlorophenolicus (strain ATCC 700700 / DSM 12829 / CIP 107037 / JCM 12360 / KCTC 9906 / NCIMB 13794 / A6) (Arthrobacter chlorophenolicus).